Here is a 623-residue protein sequence, read N- to C-terminus: UvrABC system protein C (623 aa).

The GIY-YIG domain occupies G27–V105. One can recognise a UVR domain in the interval T215–V250.

The protein belongs to the UvrC family. As to quaternary structure, interacts with UvrB in an incision complex.

It is found in the cytoplasm. Its function is as follows. The UvrABC repair system catalyzes the recognition and processing of DNA lesions. UvrC both incises the 5' and 3' sides of the lesion. The N-terminal half is responsible for the 3' incision and the C-terminal half is responsible for the 5' incision. This is UvrABC system protein C from Cereibacter sphaeroides (strain ATCC 17023 / DSM 158 / JCM 6121 / CCUG 31486 / LMG 2827 / NBRC 12203 / NCIMB 8253 / ATH 2.4.1.) (Rhodobacter sphaeroides).